Reading from the N-terminus, the 265-residue chain is Homeobox protein CDX-1 (265 aa).

The tract at residues 9-152 (KDSPVYPGPA…GGGGVSGKTR (144 aa)) is disordered. The segment covering 30–43 (YGPPAPPPAPPQYP) has biased composition (pro residues). The span at 73–92 (AAAYGPGPAAPAASPASLAF) shows a compositional bias: low complexity. The segment covering 93 to 108 (GPPPDFSPVPAPPGPG) has biased composition (pro residues). The span at 110-126 (GLLAQPLGGPGTPSSPG) shows a compositional bias: low complexity. A DNA-binding region (homeobox) is located at residues 154 to 213 (KDKYRVVYTDHQRLELEKEFHYSRYITIRRKSELAANLGLTERQVKIWFQNRRAKERKVN). The tract at residues 157-178 (YRVVYTDHQRLELEKEFHYSRY) is interaction with DNA. The segment at 196-207 (RQVKIWFQNRRA) is interaction with 5-mCpG DNA. The segment covering 206-217 (RAKERKVNKKKQ) has biased composition (basic residues). The interval 206-265 (RAKERKVNKKKQQQQQPPQPPTAHDITATPARPSLGGLCPSNTSLLATSSPMPVKEEFLP) is disordered. Polar residues predominate over residues 245 to 256 (PSNTSLLATSSP).

This sequence belongs to the Caudal homeobox family.

The protein resides in the nucleus. Functionally, plays a role in transcriptional regulation. Involved in activated KRAS-mediated transcriptional activation of PRKD1 in colorectal cancer (CRC) cells. Binds to the PRKD1 promoter in colorectal cancer (CRC) cells. Could play a role in the terminal differentiation of the intestine. Binds preferentially to methylated DNA. The protein is Homeobox protein CDX-1 (CDX1) of Pongo pygmaeus (Bornean orangutan).